The sequence spans 612 residues: Glucoamylase (612 aa).

The N-terminal stretch at 1–19 (MVSFSSCLRALALGSSVLA) is a signal peptide. Residues 20-25 (VQPVLR) constitute a propeptide that is removed on maturation. N39 is a glycosylation site (N-linked (GlcNAc...) asparagine). W146 lines the substrate pocket. The Proton acceptor role is filled by D202. The active-site Proton donor is the E205. 3 cysteine pairs are disulfide-bonded: C236-C239, C248-C475, and C288-C296. The 107-residue stretch at 506 to 612 (CQVPTTVSVT…KSAVQSDVWR (107 aa)) folds into the CBM20 domain.

Belongs to the glycosyl hydrolase 15 family.

It carries out the reaction Hydrolysis of terminal (1-&gt;4)-linked alpha-D-glucose residues successively from non-reducing ends of the chains with release of beta-D-glucose.. The sequence is that of Glucoamylase (glaA) from Aspergillus oryzae (strain ATCC 42149 / RIB 40) (Yellow koji mold).